Here is a 188-residue protein sequence, read N- to C-terminus: Cytochrome b561 homolog 2 (188 aa).

Residues 1-15 (MSFTNTPERYGVISA) lie on the Cytoplasmic side of the membrane. A helical membrane pass occupies residues 16-36 (AFHWLSAIIVYGMFALGLWMV). Residues His-18 and His-52 each coordinate heme b. Residues 37 to 54 (TLSYYDGWYHKAPELHKS) lie on the Periplasmic side of the membrane. A helical membrane pass occupies residues 55-75 (IGILLMMGLVIRVLWRVISPP). Residues 76-91 (PGPLPSYSPMTRLAAR) are Cytoplasmic-facing. The helical transmembrane segment at 92–112 (AGHLALYLLLFAIGISGYLIS) threads the bilayer. Over 113 to 143 (TADGKPISVFGWFDVPATLADAGAQADFAGA) the chain is Periplasmic. A helical transmembrane segment spans residues 144 to 164 (LHFWLAWSVVVLSVMHGFMAL). Heme b contacts are provided by His-145 and His-159. Residues 165–188 (KHHFIDKDDTLKRMLGKSSSDYGV) are Cytoplasmic-facing.

This sequence belongs to the cytochrome b561 family. Heme b is required as a cofactor.

It localises to the cell inner membrane. In Escherichia coli (strain K12), this protein is Cytochrome b561 homolog 2 (yceJ).